Consider the following 226-residue polypeptide: PKHD-type hydroxylase AZC_3753 (226 aa).

The 101-residue stretch at 78–178 folds into the Fe2OG dioxygenase domain; sequence RILPPMFNRY…RVASFFWTQS (101 aa). Residues His96, Asp98, and His159 each coordinate Fe cation. Arg169 is a binding site for 2-oxoglutarate.

Fe(2+) is required as a cofactor. L-ascorbate serves as cofactor.

This chain is PKHD-type hydroxylase AZC_3753, found in Azorhizobium caulinodans (strain ATCC 43989 / DSM 5975 / JCM 20966 / LMG 6465 / NBRC 14845 / NCIMB 13405 / ORS 571).